The following is a 144-amino-acid chain: Large ribosomal subunit protein uL15 (144 aa).

Residues 1–52 (MRLNSLSPAEGAKHSAKRLGRGIGSGLGKTGGRGHKGQKSRTGGGVRRGFEG) form a disordered region. Positions 21–31 (RGIGSGLGKTG) are enriched in gly residues.

This sequence belongs to the universal ribosomal protein uL15 family. Part of the 50S ribosomal subunit.

Binds to the 23S rRNA. The polypeptide is Large ribosomal subunit protein uL15 (Haemophilus ducreyi (strain 35000HP / ATCC 700724)).